The chain runs to 443 residues: MSSTDSVVAGQAKVTTWRKTDTRWVLGLFGTAIGAGVLFFPISAGIGGLLPIIFMLILAFPIAFFCHRALARLCLSGRSISDNITDTVDQHFGHVGGVVITFLYFFAICPLLWIYGVTITNTFIAFWQHQLLLPAINRGVVALAILLVMAFFIYFGKDLMVKVMGYLVFPFITCLVLISLSLIPYWTGDIFTSFDMHSLSLFGSHGILVTVWLGIAIMVFSFNFSPIVSSFVVSKREEYEADFGREYTEQKCAKIISRASVLMVVVVMFFAFSCLFTLSPQDMAQAKQQNIPILSYLANHFSSLGSGKSTYATVLEYGASIIALVAIFKSFFGHYLGTLEGLNGLIIKFGYHGEKSQAPMKKLNMISMVIIMGSTWVIAYINPNILDLIGAMGAPIIAALLCLLPMYAVWRVPALAKYKGKASNYFVTIIGLLTILNIVYQLM.

The next 11 helical transmembrane spans lie at 24 to 44, 45 to 65, 95 to 115, 140 to 160, 163 to 183, 207 to 227, 259 to 279, 319 to 339, 363 to 383, 385 to 405, and 423 to 443; these read WVLG…PISA, GIGG…IAFF, VGGV…LWIY, VVAL…KDLM, VMGY…LSLI, ILVT…FSPI, ASVL…FTLS, ASII…LGTL, LNMI…YINP, ILDL…CLLP, and SNYF…YQLM.

It belongs to the amino acid/polyamine transporter 2 family. SdaC/TdcC subfamily.

It localises to the cell inner membrane. The enzyme catalyses L-threonine(in) + H(+)(in) = L-threonine(out) + H(+)(out). It carries out the reaction L-serine(in) + H(+)(in) = L-serine(out) + H(+)(out). Involved in the import of threonine and serine into the cell, with the concomitant import of a proton (symport system). The chain is Threonine/serine transporter TdcC from Edwardsiella piscicida.